We begin with the raw amino-acid sequence, 264 residues long: Major prion protein (264 aa).

A signal peptide spans 1 to 24; sequence MVKSHIGSWILVLFVAMWSDVGLC. The tract at residues 25 to 241 is interaction with GRB2, ERI3 and SYN1; the sequence is KKRPKPGGGW…ESQAYYQRGA (217 aa). The disordered stretch occupies residues 28–118; the sequence is PKPGGGWNTG…QWNKPSKPKT (91 aa). 6 tandem repeats follow at residues 54 to 62, 63 to 70, 71 to 78, 79 to 86, 87 to 94, and 95 to 103. A 6 X 8 AA tandem repeats of P-H-G-G-G-W-G-Q region spans residues 54-103; sequence PQGGGSWGQPHGGGWGQPHGGSWGQPHGGGWGQPHGGGWGQPHGGGGWGQ. Gly residues predominate over residues 55–107; it reads QGGGSWGQPHGGGWGQPHGGSWGQPHGGGWGQPHGGGWGQPHGGGGWGQGGTH. Residues His-72, Gly-73, Gly-74, His-80, Gly-81, Gly-82, His-88, Gly-89, Gly-90, His-96, Gly-98, and Gly-99 each contribute to the Cu(2+) site. Cysteines 190 and 225 form a disulfide. Asn-192 and Asn-208 each carry an N-linked (GlcNAc...) asparagine glycan. A lipid anchor (GPI-anchor amidated alanine) is attached at Ala-241. Positions 242 to 264 are cleaved as a propeptide — removed in mature form; it reads SVVLFSSPPVVLLISFLIFLIVG.

This sequence belongs to the prion family. As to quaternary structure, monomer and homodimer. Has a tendency to aggregate into amyloid fibrils containing a cross-beta spine, formed by a steric zipper of superposed beta-strands. Soluble oligomers may represent an intermediate stage on the path to fibril formation. Copper binding may promote oligomerization. Interacts with GRB2, APP, ERI3/PRNPIP and SYN1. Mislocalized cytosolically exposed PrP interacts with MGRN1; this interaction alters MGRN1 subcellular location and causes lysosomal enlargement. Interacts with KIAA1191.

Its subcellular location is the cell membrane. It is found in the golgi apparatus. In terms of biological role, its primary physiological function is unclear. Has cytoprotective activity against internal or environmental stresses. May play a role in neuronal development and synaptic plasticity. May be required for neuronal myelin sheath maintenance. May play a role in iron uptake and iron homeostasis. Soluble oligomers are toxic to cultured neuroblastoma cells and induce apoptosis (in vitro). Association with GPC1 (via its heparan sulfate chains) targets PRNP to lipid rafts. Also provides Cu(2+) or Zn(2+) for the ascorbate-mediated GPC1 deaminase degradation of its heparan sulfate side chains. In Boselaphus tragocamelus (Nilgai), this protein is Major prion protein (PRNP).